Reading from the N-terminus, the 215-residue chain is L-fuculose phosphate aldolase (215 aa).

Substrate contacts are provided by residues 28-29 (GN), 43-44 (TG), and 71-72 (SS). Catalysis depends on Glu-73, which acts as the Proton donor/acceptor. Zn(2+) contacts are provided by Glu-73, His-92, His-94, and His-155.

Belongs to the aldolase class II family. AraD/FucA subfamily. As to quaternary structure, homotetramer. Zn(2+) is required as a cofactor.

The enzyme catalyses L-fuculose 1-phosphate = (S)-lactaldehyde + dihydroxyacetone phosphate. It participates in carbohydrate degradation; L-fucose degradation; L-lactaldehyde and glycerone phosphate from L-fucose: step 3/3. Involved in the degradation of L-fucose and D-arabinose. Catalyzes the reversible cleavage of L-fuculose 1-phosphate (Fuc1P) to yield dihydroxyacetone phosphate (DHAP) and L-lactaldehyde. This is L-fuculose phosphate aldolase from Escherichia coli O157:H7.